A 329-amino-acid chain; its full sequence is DNA-directed RNA polymerase subunit alpha (329 aa).

Residues 1 to 235 (MLGSVTDFLK…EQLDAFVDLR (235 aa)) form an alpha N-terminal domain (alpha-NTD) region. An alpha C-terminal domain (alpha-CTD) region spans residues 249-329 (FDPILLRPVD…NWPPASLADN (81 aa)).

The protein belongs to the RNA polymerase alpha chain family. As to quaternary structure, homodimer. The RNAP catalytic core consists of 2 alpha, 1 beta, 1 beta' and 1 omega subunit. When a sigma factor is associated with the core the holoenzyme is formed, which can initiate transcription.

It catalyses the reaction RNA(n) + a ribonucleoside 5'-triphosphate = RNA(n+1) + diphosphate. In terms of biological role, DNA-dependent RNA polymerase catalyzes the transcription of DNA into RNA using the four ribonucleoside triphosphates as substrates. In Tolumonas auensis (strain DSM 9187 / NBRC 110442 / TA 4), this protein is DNA-directed RNA polymerase subunit alpha.